The chain runs to 36 residues: Photosystem I reaction center subunit VIII (36 aa).

The chain crosses the membrane as a helical span at residues 7-29 (PSIFVPLVGLVFPAITMASLFIY).

Belongs to the PsaI family.

It localises to the plastid. The protein resides in the chloroplast thylakoid membrane. May help in the organization of the PsaL subunit. This chain is Photosystem I reaction center subunit VIII, found in Psilotum nudum (Whisk fern).